We begin with the raw amino-acid sequence, 234 residues long: 2-C-methyl-D-erythritol 4-phosphate cytidylyltransferase (234 aa).

It belongs to the IspD/TarI cytidylyltransferase family. IspD subfamily.

The catalysed reaction is 2-C-methyl-D-erythritol 4-phosphate + CTP + H(+) = 4-CDP-2-C-methyl-D-erythritol + diphosphate. The protein operates within isoprenoid biosynthesis; isopentenyl diphosphate biosynthesis via DXP pathway; isopentenyl diphosphate from 1-deoxy-D-xylulose 5-phosphate: step 2/6. Functionally, catalyzes the formation of 4-diphosphocytidyl-2-C-methyl-D-erythritol from CTP and 2-C-methyl-D-erythritol 4-phosphate (MEP). The polypeptide is 2-C-methyl-D-erythritol 4-phosphate cytidylyltransferase (Thermosynechococcus vestitus (strain NIES-2133 / IAM M-273 / BP-1)).